A 465-amino-acid chain; its full sequence is Antithrombin-III (465 aa).

The first 32 residues, 1–32 (MISNGIGTVTAGKRSICLLPLLLIGLWGCVTC), serve as a signal peptide directing secretion. Cystine bridges form between C41–C161 and C54–C128. T64 carries the post-translational modification Phosphothreonine. At S69 the chain carries Phosphoserine. Position 82 (W82) interacts with heparin. N-linked (GlcNAc...) asparagine glycosylation is present at N129. R162 contributes to the heparin binding site. N168 carries N-linked (GlcNAc...) asparagine glycosylation. R178 serves as a coordination point for heparin. N188 and N225 each carry an N-linked (GlcNAc...) asparagine glycan. Residues C280 and C463 are joined by a disulfide bond.

It belongs to the serpin family. Forms protease inhibiting heterodimer with TMPRSS7. In terms of processing, phosphorylated by FAM20C in the extracellular medium. As to expression, plasma.

The protein resides in the secreted. It is found in the extracellular space. Its function is as follows. Most important serine protease inhibitor in plasma that regulates the blood coagulation cascade. AT-III inhibits thrombin, matriptase-3/TMPRSS7, as well as factors IXa, Xa and XIa. Its inhibitory activity is greatly enhanced in the presence of heparin. In Bos taurus (Bovine), this protein is Antithrombin-III (SERPINC1).